The chain runs to 365 residues: 3-isopropylmalate dehydrogenase (365 aa).

80–91 lines the NAD(+) pocket; sequence GPKWGTGSVRPE. Substrate-binding residues include Arg-98, Arg-108, Arg-137, and Asp-226. Positions 226, 251, and 255 each coordinate Mg(2+). 290–301 contributes to the NAD(+) binding site; that stretch reads GSAPDLPKGKVN.

It belongs to the isocitrate and isopropylmalate dehydrogenases family. Homodimer. The cofactor is Mg(2+). Mn(2+) is required as a cofactor.

It localises to the cytoplasm. It carries out the reaction (2R,3S)-3-isopropylmalate + NAD(+) = 4-methyl-2-oxopentanoate + CO2 + NADH. It functions in the pathway amino-acid biosynthesis; L-leucine biosynthesis; L-leucine from 3-methyl-2-oxobutanoate: step 3/4. Catalyzes the oxidation of 3-carboxy-2-hydroxy-4-methylpentanoate (3-isopropylmalate) to 3-carboxy-4-methyl-2-oxopentanoate. The product decarboxylates to 4-methyl-2 oxopentanoate. This is 3-isopropylmalate dehydrogenase (LEU2) from Maudiozyma exigua (Yeast).